The following is a 232-amino-acid chain: Pyridoxine 5'-phosphate synthase (232 aa).

3-amino-2-oxopropyl phosphate is bound at residue Asn-7. A 1-deoxy-D-xylulose 5-phosphate-binding site is contributed by 9–10 (DH). 3-amino-2-oxopropyl phosphate is bound at residue Arg-18. The Proton acceptor role is filled by His-43. 1-deoxy-D-xylulose 5-phosphate-binding residues include Arg-45 and His-50. Catalysis depends on Glu-69, which acts as the Proton acceptor. Thr-99 serves as a coordination point for 1-deoxy-D-xylulose 5-phosphate. His-185 (proton donor) is an active-site residue. 3-amino-2-oxopropyl phosphate-binding positions include Gly-186 and 207–208 (GH).

It belongs to the PNP synthase family. In terms of assembly, homooctamer; tetramer of dimers.

Its subcellular location is the cytoplasm. It catalyses the reaction 3-amino-2-oxopropyl phosphate + 1-deoxy-D-xylulose 5-phosphate = pyridoxine 5'-phosphate + phosphate + 2 H2O + H(+). It participates in cofactor biosynthesis; pyridoxine 5'-phosphate biosynthesis; pyridoxine 5'-phosphate from D-erythrose 4-phosphate: step 5/5. In terms of biological role, catalyzes the complicated ring closure reaction between the two acyclic compounds 1-deoxy-D-xylulose-5-phosphate (DXP) and 3-amino-2-oxopropyl phosphate (1-amino-acetone-3-phosphate or AAP) to form pyridoxine 5'-phosphate (PNP) and inorganic phosphate. The chain is Pyridoxine 5'-phosphate synthase from Gluconobacter oxydans (strain 621H) (Gluconobacter suboxydans).